A 255-amino-acid polypeptide reads, in one-letter code: Arginine-binding extracellular protein ArtP (255 aa).

A signal peptide spans 1–19; the sequence is MKKWLLLLVAACITFALTA. Residue C20 is the site of N-palmitoyl cysteine attachment. C20 is lipidated: S-diacylglycerol cysteine.

It belongs to the bacterial solute-binding protein 3 family.

The protein localises to the cell membrane. Functionally, part of a binding-protein-dependent transport system for arginine. The sequence is that of Arginine-binding extracellular protein ArtP (artP) from Bacillus subtilis (strain 168).